The primary structure comprises 160 residues: 2-C-methyl-D-erythritol 2,4-cyclodiphosphate synthase (160 aa).

2 residues coordinate a divalent metal cation: Asp-11 and His-13. Residues 11 to 13 (DVH) and 37 to 38 (HS) each bind 4-CDP-2-C-methyl-D-erythritol 2-phosphate. His-45 provides a ligand contact to a divalent metal cation. 4-CDP-2-C-methyl-D-erythritol 2-phosphate is bound by residues 59 to 61 (DIG), 64 to 68 (FPDTD), 135 to 138 (TTTE), Phe-142, and Arg-145.

Belongs to the IspF family. As to quaternary structure, homotrimer. It depends on a divalent metal cation as a cofactor.

The catalysed reaction is 4-CDP-2-C-methyl-D-erythritol 2-phosphate = 2-C-methyl-D-erythritol 2,4-cyclic diphosphate + CMP. The protein operates within isoprenoid biosynthesis; isopentenyl diphosphate biosynthesis via DXP pathway; isopentenyl diphosphate from 1-deoxy-D-xylulose 5-phosphate: step 4/6. Its function is as follows. Involved in the biosynthesis of isopentenyl diphosphate (IPP) and dimethylallyl diphosphate (DMAPP), two major building blocks of isoprenoid compounds. Catalyzes the conversion of 4-diphosphocytidyl-2-C-methyl-D-erythritol 2-phosphate (CDP-ME2P) to 2-C-methyl-D-erythritol 2,4-cyclodiphosphate (ME-CPP) with a corresponding release of cytidine 5-monophosphate (CMP). This chain is 2-C-methyl-D-erythritol 2,4-cyclodiphosphate synthase, found in Alcanivorax borkumensis (strain ATCC 700651 / DSM 11573 / NCIMB 13689 / SK2).